Consider the following 26-residue polypeptide: uncharacterized protein (26 aa).

The helical transmembrane segment at 3 to 23 threads the bilayer; it reads IIYLILFLIVIYLLYRILDVL.

Its subcellular location is the membrane. This is an uncharacterized protein from Helicobacter pylori (strain J99 / ATCC 700824) (Campylobacter pylori J99).